A 602-amino-acid chain; its full sequence is Protein NRT1/ PTR FAMILY 5.7 (602 aa).

A run of 2 helical transmembrane segments spans residues 56 to 73 (LSYF…TTIL) and 87 to 107 (WSGV…AYLG). Thr111 carries the post-translational modification Phosphothreonine. The next 10 helical transmembrane spans lie at 112–132 (VLLA…SWFI), 152–172 (IAFF…KPSL), 197–217 (WWNA…VYIE), 220–240 (IGWG…FFIF), 337–357 (VKLL…GVCA), 381–401 (IVPP…TVTI), 422–442 (ILQR…IAAL), 465–485 (IWLA…LVGL), 500–520 (LGIA…NLLI), and 548–568 (FYWM…IVAM).

This sequence belongs to the major facilitator superfamily. Proton-dependent oligopeptide transporter (POT/PTR) (TC 2.A.17) family. As to expression, expressed in shoots, stems, leaves and flowers.

The protein localises to the membrane. The chain is Protein NRT1/ PTR FAMILY 5.7 (NPF5.7) from Arabidopsis thaliana (Mouse-ear cress).